Reading from the N-terminus, the 376-residue chain is Alcohol dehydrogenase 1 (376 aa).

S2 is modified (N-acetylserine). C47, H68, C98, C101, C104, C112, and C176 together coordinate Zn(2+). NAD(+) is bound by residues 201–206 (GLGGVG), D225, and K230. K235 is modified (N6-succinyllysine). Position 294–296 (294–296 (VGV)) interacts with NAD(+). Residue K341 is modified to N6-succinyllysine. R371 is an NAD(+) binding site.

Belongs to the zinc-containing alcohol dehydrogenase family. Class-I subfamily. As to quaternary structure, dimer of identical or non-identical chains of three types (A, B, C), which are coded by 3 separate genes at different loci. Requires Zn(2+) as cofactor.

It is found in the cytoplasm. The catalysed reaction is a primary alcohol + NAD(+) = an aldehyde + NADH + H(+). It catalyses the reaction a secondary alcohol + NAD(+) = a ketone + NADH + H(+). This Rattus norvegicus (Rat) protein is Alcohol dehydrogenase 1 (Adh1).